Here is a 472-residue protein sequence, read N- to C-terminus: Aspartyl/glutamyl-tRNA(Asn/Gln) amidotransferase subunit B (472 aa).

This sequence belongs to the GatB/GatE family. GatB subfamily. Heterotrimer of A, B and C subunits.

It catalyses the reaction L-glutamyl-tRNA(Gln) + L-glutamine + ATP + H2O = L-glutaminyl-tRNA(Gln) + L-glutamate + ADP + phosphate + H(+). The catalysed reaction is L-aspartyl-tRNA(Asn) + L-glutamine + ATP + H2O = L-asparaginyl-tRNA(Asn) + L-glutamate + ADP + phosphate + 2 H(+). Allows the formation of correctly charged Asn-tRNA(Asn) or Gln-tRNA(Gln) through the transamidation of misacylated Asp-tRNA(Asn) or Glu-tRNA(Gln) in organisms which lack either or both of asparaginyl-tRNA or glutaminyl-tRNA synthetases. The reaction takes place in the presence of glutamine and ATP through an activated phospho-Asp-tRNA(Asn) or phospho-Glu-tRNA(Gln). The sequence is that of Aspartyl/glutamyl-tRNA(Asn/Gln) amidotransferase subunit B from Sulfolobus acidocaldarius (strain ATCC 33909 / DSM 639 / JCM 8929 / NBRC 15157 / NCIMB 11770).